Here is a 435-residue protein sequence, read N- to C-terminus: GTPase Obg (435 aa).

Residues 1 to 159 (MAFIDKCKIV…VEVLLELKTI (159 aa)) enclose the Obg domain. Positions 160-329 (ADIGIIGLPN…MLDDVIKIYF (170 aa)) constitute an OBG-type G domain. GTP-binding positions include 166–173 (GLPNAGKS), 191–195 (FTTLN), 212–215 (DIPG), 282–285 (NKID), and 310–312 (SAL). Mg(2+)-binding residues include Ser-173 and Thr-193. Residues 357 to 435 (KSKELDKTIE…IYDITLEFEE (79 aa)) enclose the OCT domain.

It belongs to the TRAFAC class OBG-HflX-like GTPase superfamily. OBG GTPase family. In terms of assembly, monomer. Requires Mg(2+) as cofactor.

The protein resides in the cytoplasm. An essential GTPase which binds GTP, GDP and possibly (p)ppGpp with moderate affinity, with high nucleotide exchange rates and a fairly low GTP hydrolysis rate. Plays a role in control of the cell cycle, stress response, ribosome biogenesis and in those bacteria that undergo differentiation, in morphogenesis control. The chain is GTPase Obg from Ureaplasma parvum serovar 3 (strain ATCC 27815 / 27 / NCTC 11736).